The primary structure comprises 286 residues: Bifunctional protein FolD (286 aa).

Residues glycine 165–serine 167 and serine 190 each bind NADP(+).

The protein belongs to the tetrahydrofolate dehydrogenase/cyclohydrolase family. Homodimer.

The catalysed reaction is (6R)-5,10-methylene-5,6,7,8-tetrahydrofolate + NADP(+) = (6R)-5,10-methenyltetrahydrofolate + NADPH. It catalyses the reaction (6R)-5,10-methenyltetrahydrofolate + H2O = (6R)-10-formyltetrahydrofolate + H(+). The protein operates within one-carbon metabolism; tetrahydrofolate interconversion. Its function is as follows. Catalyzes the oxidation of 5,10-methylenetetrahydrofolate to 5,10-methenyltetrahydrofolate and then the hydrolysis of 5,10-methenyltetrahydrofolate to 10-formyltetrahydrofolate. The chain is Bifunctional protein FolD from Burkholderia lata (strain ATCC 17760 / DSM 23089 / LMG 22485 / NCIMB 9086 / R18194 / 383).